Consider the following 23-residue polypeptide: uncharacterized protein (23 aa).

It is found in the plastid. The protein resides in the chloroplast. This is an uncharacterized protein from Zea mays (Maize).